The primary structure comprises 309 residues: 5-oxoprolinase subunit C (309 aa).

Belongs to the PxpC family. As to quaternary structure, forms a complex composed of PxpA, PxpB and PxpC.

It catalyses the reaction 5-oxo-L-proline + ATP + 2 H2O = L-glutamate + ADP + phosphate + H(+). Its function is as follows. Catalyzes the cleavage of 5-oxoproline to form L-glutamate coupled to the hydrolysis of ATP to ADP and inorganic phosphate. This Haemophilus influenzae (strain ATCC 51907 / DSM 11121 / KW20 / Rd) protein is 5-oxoprolinase subunit C.